A 231-amino-acid polypeptide reads, in one-letter code: Translin-associated protein X homolog (231 aa).

The protein belongs to the translin family.

The protein localises to the cytoplasm. Its subcellular location is the nucleus. The polypeptide is Translin-associated protein X homolog (Schizosaccharomyces pombe (strain 972 / ATCC 24843) (Fission yeast)).